The following is a 377-amino-acid chain: Trichodiene synthase (377 aa).

This sequence belongs to the trichodiene synthase family.

It catalyses the reaction (2E,6E)-farnesyl diphosphate = trichodiene + diphosphate. The protein operates within sesquiterpene biosynthesis; trichothecene biosynthesis. TS is a member of the terpene cyclase group of enzymes. It catalyzes the isomerization and cyclization of farnesyl pyro-phosphate to form trichodiene, the first cyclic intermediate in the biosynthetic pathway for trichothecenes. It serves to branch trichothecene biosynthesis from the isoprenoid pathway. The polypeptide is Trichodiene synthase (TRI5) (Fusarium poae).